The sequence spans 254 residues: Trypsin (254 aa).

Residues 1-16 (MLRFIAVFALVNCALA) form the signal peptide. A propeptide spans 17-26 (GTLPNDLDGR) (activation peptide). Residues 27–252 (IVNGVDTTIE…VRSWIEKTAK (226 aa)) enclose the Peptidase S1 domain. C53 and C69 are oxidised to a cystine. Catalysis depends on charge relay system residues H68 and D113. Disulfide bonds link C154–C158, C178–C195, and C204–C228. S208 acts as the Charge relay system in catalysis.

Belongs to the peptidase S1 family.

It is found in the secreted. Its subcellular location is the extracellular space. It carries out the reaction Preferential cleavage: Arg-|-Xaa, Lys-|-Xaa.. Functionally, involved in digestion of a protein meal. The chain is Trypsin from Sarcophaga bullata (Grey flesh fly).